A 623-amino-acid polypeptide reads, in one-letter code: Bifunctional enzyme CysN/CysC (623 aa).

Residues 1 to 450 (MQSVIAYLKQ…HVARARIKGQ (450 aa)) are sulfate adenylyltransferase. The region spanning 14–228 (KPLLRFITCG…YLEALEPADV (215 aa)) is the tr-type G domain. The tract at residues 23-30 (GSVDDGKS) is G1. Residue 23–30 (GSVDDGKS) coordinates GTP. The G2 stretch occupies residues 81–85 (GITID). A G3 region spans residues 102–105 (DCPG). Residues 102 to 106 (DCPGH) and 157 to 160 (NKMD) contribute to the GTP site. Residues 157–160 (NKMD) are G4. Positions 194 to 196 (SAL) are G5. Positions 451 to 623 (TPKVLWFTGL…VLSLLGVEGK (173 aa)) are adenylyl-sulfate kinase. Residue 459–466 (GLSGAGKS) coordinates ATP. Ser533 functions as the Phosphoserine intermediate in the catalytic mechanism.

This sequence in the C-terminal section; belongs to the APS kinase family. In the N-terminal section; belongs to the TRAFAC class translation factor GTPase superfamily. Classic translation factor GTPase family. CysN/NodQ subfamily. As to quaternary structure, heterodimer composed of CysD, the smaller subunit, and CysNC.

It carries out the reaction sulfate + ATP + H(+) = adenosine 5'-phosphosulfate + diphosphate. It catalyses the reaction adenosine 5'-phosphosulfate + ATP = 3'-phosphoadenylyl sulfate + ADP + H(+). Its pathway is sulfur metabolism; hydrogen sulfide biosynthesis; sulfite from sulfate: step 1/3. It functions in the pathway sulfur metabolism; hydrogen sulfide biosynthesis; sulfite from sulfate: step 2/3. Its function is as follows. With CysD forms the ATP sulfurylase (ATPS) that catalyzes the adenylation of sulfate producing adenosine 5'-phosphosulfate (APS) and diphosphate, the first enzymatic step in sulfur assimilation pathway. APS synthesis involves the formation of a high-energy phosphoric-sulfuric acid anhydride bond driven by GTP hydrolysis by CysN coupled to ATP hydrolysis by CysD. Functionally, APS kinase catalyzes the synthesis of activated sulfate. The polypeptide is Bifunctional enzyme CysN/CysC (cysNC) (Xylella fastidiosa (strain Temecula1 / ATCC 700964)).